We begin with the raw amino-acid sequence, 300 residues long: Erythroblast NAD(P)(+)--arginine ADP-ribosyltransferase (300 aa).

An N-terminal signal peptide occupies residues 1–22 (MEEPLLHAILGLVLLLSTRTDA). Intrachain disulfides connect cysteine 51–cysteine 260 and cysteine 159–cysteine 208. Residues 70–256 (ETFAEGWRSA…IQLRSQGKSS (187 aa)) enclose the TR mART core domain. NAD(+)-binding residues include tyrosine 107, arginine 164, and glutamine 183. Residue arginine 164 is part of the active site. Serine 186 is an active-site residue. Serine 217 is a binding site for NAD(+). Residue glutamate 224 is part of the active site. Residues 276–300 (SADKSSPLPRSPWPGWAPLAAPHSH) form a disordered region.

It belongs to the Arg-specific ADP-ribosyltransferase family.

It catalyses the reaction L-arginyl-[protein] + NAD(+) = N(omega)-(ADP-D-ribosyl)-L-arginyl-[protein] + nicotinamide + H(+). The chain is Erythroblast NAD(P)(+)--arginine ADP-ribosyltransferase (MADPRT) from Gallus gallus (Chicken).